Here is a 344-residue protein sequence, read N- to C-terminus: Ferredoxin--NADP reductase (344 aa).

Residues Asp36, Gln44, Tyr49, Val89, Phe127, Asp291, and Thr332 each contribute to the FAD site.

This sequence belongs to the ferredoxin--NADP reductase type 2 family. As to quaternary structure, homodimer. FAD serves as cofactor.

It catalyses the reaction 2 reduced [2Fe-2S]-[ferredoxin] + NADP(+) + H(+) = 2 oxidized [2Fe-2S]-[ferredoxin] + NADPH. The chain is Ferredoxin--NADP reductase from Beijerinckia indica subsp. indica (strain ATCC 9039 / DSM 1715 / NCIMB 8712).